Here is a 235-residue protein sequence, read N- to C-terminus: 1-(5-phosphoribosyl)-5-[(5-phosphoribosylamino)methylideneamino] imidazole-4-carboxamide isomerase (235 aa).

The active-site Proton acceptor is Asp-8. Asp-128 (proton donor) is an active-site residue.

Belongs to the HisA/HisF family.

It localises to the cytoplasm. It catalyses the reaction 1-(5-phospho-beta-D-ribosyl)-5-[(5-phospho-beta-D-ribosylamino)methylideneamino]imidazole-4-carboxamide = 5-[(5-phospho-1-deoxy-D-ribulos-1-ylimino)methylamino]-1-(5-phospho-beta-D-ribosyl)imidazole-4-carboxamide. It functions in the pathway amino-acid biosynthesis; L-histidine biosynthesis; L-histidine from 5-phospho-alpha-D-ribose 1-diphosphate: step 4/9. The polypeptide is 1-(5-phosphoribosyl)-5-[(5-phosphoribosylamino)methylideneamino] imidazole-4-carboxamide isomerase (Thermus thermophilus (strain ATCC 27634 / DSM 579 / HB8)).